A 66-amino-acid polypeptide reads, in one-letter code: Protein I177L (66 aa).

The protein belongs to the asfivirus I177L family.

It localises to the virion. The chain is Protein I177L from African swine fever virus (isolate Tick/Malawi/Lil 20-1/1983) (ASFV).